Consider the following 468-residue polypeptide: Cysteine--tRNA ligase (468 aa).

Residue cysteine 33 coordinates Zn(2+). The short motif at 35–45 (ATVQGLPHIGH) is the 'HIGH' region element. Zn(2+) is bound by residues cysteine 211, histidine 236, and glutamate 240. The 'KMSKS' region signature appears at 267–271 (KMSKS). Lysine 270 is a binding site for ATP.

It belongs to the class-I aminoacyl-tRNA synthetase family. Monomer. Zn(2+) is required as a cofactor.

It is found in the cytoplasm. It catalyses the reaction tRNA(Cys) + L-cysteine + ATP = L-cysteinyl-tRNA(Cys) + AMP + diphosphate. This is Cysteine--tRNA ligase from Mycobacterium avium (strain 104).